We begin with the raw amino-acid sequence, 439 residues long: Putative myrosinase 3 (439 aa).

Residues Met1–Ala19 form the signal peptide. Residue Asn33 is glycosylated (N-linked (GlcNAc...) asparagine). Residues His145, Asn190–Gln191, and Tyr316 each bind a beta-D-glucoside. Asn336 carries an N-linked (GlcNAc...) asparagine glycan. A beta-D-glucoside contacts are provided by Glu386 and Trp404. The active-site Nucleophile is Glu386.

Belongs to the glycosyl hydrolase 1 family. Expressed specifically in stamens and petals.

It carries out the reaction a thioglucoside + H2O = a sugar + a thiol.. This is Putative myrosinase 3 from Arabidopsis thaliana (Mouse-ear cress).